The chain runs to 338 residues: Holliday junction branch migration complex subunit RuvB (338 aa).

Residues 1 to 181 (MDRIVEIEKV…FGMDFRLQFY (181 aa)) are large ATPase domain (RuvB-L). Residues Leu-20, Arg-21, Gly-62, Lys-65, Thr-66, Thr-67, 128-130 (EDF), Arg-171, Tyr-181, and Arg-218 contribute to the ATP site. Thr-66 contacts Mg(2+). The small ATPAse domain (RuvB-S) stretch occupies residues 182-252 (STAELSRIIQ…RAKEGLNALG (71 aa)). Positions 255-338 (SLGFDEMDIK…NRTKGLFDGE (84 aa)) are head domain (RuvB-H). 2 residues coordinate DNA: Arg-309 and Arg-314.

This sequence belongs to the RuvB family. Homohexamer. Forms an RuvA(8)-RuvB(12)-Holliday junction (HJ) complex. HJ DNA is sandwiched between 2 RuvA tetramers; dsDNA enters through RuvA and exits via RuvB. An RuvB hexamer assembles on each DNA strand where it exits the tetramer. Each RuvB hexamer is contacted by two RuvA subunits (via domain III) on 2 adjacent RuvB subunits; this complex drives branch migration. In the full resolvosome a probable DNA-RuvA(4)-RuvB(12)-RuvC(2) complex forms which resolves the HJ.

It is found in the cytoplasm. The enzyme catalyses ATP + H2O = ADP + phosphate + H(+). Functionally, the RuvA-RuvB-RuvC complex processes Holliday junction (HJ) DNA during genetic recombination and DNA repair, while the RuvA-RuvB complex plays an important role in the rescue of blocked DNA replication forks via replication fork reversal (RFR). RuvA specifically binds to HJ cruciform DNA, conferring on it an open structure. The RuvB hexamer acts as an ATP-dependent pump, pulling dsDNA into and through the RuvAB complex. RuvB forms 2 homohexamers on either side of HJ DNA bound by 1 or 2 RuvA tetramers; 4 subunits per hexamer contact DNA at a time. Coordinated motions by a converter formed by DNA-disengaged RuvB subunits stimulates ATP hydrolysis and nucleotide exchange. Immobilization of the converter enables RuvB to convert the ATP-contained energy into a lever motion, pulling 2 nucleotides of DNA out of the RuvA tetramer per ATP hydrolyzed, thus driving DNA branch migration. The RuvB motors rotate together with the DNA substrate, which together with the progressing nucleotide cycle form the mechanistic basis for DNA recombination by continuous HJ branch migration. Branch migration allows RuvC to scan DNA until it finds its consensus sequence, where it cleaves and resolves cruciform DNA. This chain is Holliday junction branch migration complex subunit RuvB, found in Campylobacter curvus (strain 525.92).